The sequence spans 205 residues: Holliday junction branch migration complex subunit RuvA (205 aa).

The interval 1–63 (MIGMLRGHVE…QDAITLFGFG (63 aa)) is domain I. The domain II stretch occupies residues 64 to 142 (TLASKRMFLQ…LSQIEGSSAT (79 aa)). The tract at residues 143 to 145 (AST) is flexible linker. The tract at residues 146–205 (PEDTGAEQVVEGLMSLGWHQQDAAHAVQTVCADNQIETPLNAKDVPRVLKLALTSLDRGR) is domain III.

The protein belongs to the RuvA family. As to quaternary structure, homotetramer. Forms an RuvA(8)-RuvB(12)-Holliday junction (HJ) complex. HJ DNA is sandwiched between 2 RuvA tetramers; dsDNA enters through RuvA and exits via RuvB. An RuvB hexamer assembles on each DNA strand where it exits the tetramer. Each RuvB hexamer is contacted by two RuvA subunits (via domain III) on 2 adjacent RuvB subunits; this complex drives branch migration. In the full resolvosome a probable DNA-RuvA(4)-RuvB(12)-RuvC(2) complex forms which resolves the HJ.

The protein localises to the cytoplasm. Its function is as follows. The RuvA-RuvB-RuvC complex processes Holliday junction (HJ) DNA during genetic recombination and DNA repair, while the RuvA-RuvB complex plays an important role in the rescue of blocked DNA replication forks via replication fork reversal (RFR). RuvA specifically binds to HJ cruciform DNA, conferring on it an open structure. The RuvB hexamer acts as an ATP-dependent pump, pulling dsDNA into and through the RuvAB complex. HJ branch migration allows RuvC to scan DNA until it finds its consensus sequence, where it cleaves and resolves the cruciform DNA. The sequence is that of Holliday junction branch migration complex subunit RuvA from Bifidobacterium adolescentis (strain ATCC 15703 / DSM 20083 / NCTC 11814 / E194a).